The following is a 66-amino-acid chain: Brevinin-1CDYd (66 aa).

An N-terminal signal peptide occupies residues 1-22 (MFTLKKSLLILFFLGTINFSLC). A propeptide spanning residues 23 to 44 (EEERNAEEERRDDPEERDVEVE) is cleaved from the precursor. A disulfide bond links C60 and C66.

Belongs to the frog skin active peptide (FSAP) family. Brevinin subfamily. As to expression, expressed by the skin glands.

It localises to the secreted. Antimicrobial peptide. The sequence is that of Brevinin-1CDYd from Rana dybowskii (Dybovsky's frog).